Here is a 57-residue protein sequence, read N- to C-terminus: Large ribosomal subunit protein bL32 (57 aa).

Belongs to the bacterial ribosomal protein bL32 family.

The polypeptide is Large ribosomal subunit protein bL32 (Lysinibacillus sphaericus (strain C3-41)).